Reading from the N-terminus, the 162-residue chain is MNINATARSLLLTEFVSAFFLAMRYFFRPKPTINYPFEKNPISPRFRGEHALRRYPNGEERCIACKLCEAICPAQAITIEAGPRRNDGTRRTVRYDIDMVKCIYCGLCQEACPVDAIVEGPNFEFATETREELYYDKARLLANGDRWEREIAKSIELDAPYR.

4Fe-4S ferredoxin-type domains lie at 52–82 and 93–122; these read LRRY…IEAG and VRYD…EGPN. Positions 62, 65, 68, 72, 102, 105, 108, and 112 each coordinate [4Fe-4S] cluster.

It belongs to the complex I 23 kDa subunit family. In terms of assembly, NDH-1 is composed of 14 different subunits. Subunits NuoA, H, J, K, L, M, N constitute the membrane sector of the complex. It depends on [4Fe-4S] cluster as a cofactor.

Its subcellular location is the cell inner membrane. It catalyses the reaction a quinone + NADH + 5 H(+)(in) = a quinol + NAD(+) + 4 H(+)(out). In terms of biological role, NDH-1 shuttles electrons from NADH, via FMN and iron-sulfur (Fe-S) centers, to quinones in the respiratory chain. The immediate electron acceptor for the enzyme in this species is believed to be ubiquinone. Couples the redox reaction to proton translocation (for every two electrons transferred, four hydrogen ions are translocated across the cytoplasmic membrane), and thus conserves the redox energy in a proton gradient. The chain is NADH-quinone oxidoreductase subunit I 2 from Rhodopseudomonas palustris (strain BisB5).